The following is a 62-amino-acid chain: Venom protein 51.1 (62 aa).

The N-terminal stretch at 1–25 (MKFFGILLIVTMVVLVMIATTYVES) is a signal peptide. 3 disulfides stabilise this stretch: Cys-32/Cys-53, Cys-39/Cys-58, and Cys-43/Cys-60.

Expressed by the venom gland.

It localises to the secreted. Its function is as follows. Neurotoxin. Decreases the action potential of myelinated nerves in mice and frogs. This chain is Venom protein 51.1, found in Lychas mucronatus (Chinese swimming scorpion).